Here is a 110-residue protein sequence, read N- to C-terminus: MRQVTIPLIQSKSMFCVIYRSSKRDQTYLYVEKKDDFSRVPEALMKGFGQPQLAMMLPLDGRKKLVNAELEKVKQALSEQGYYLQLPPPPEDLLKQHLSSVGQNTSHADR.

The YcgL domain maps to 14–98 (MFCVIYRSSK…PPEDLLKQHL (85 aa)). The tract at residues 88–110 (PPPEDLLKQHLSSVGQNTSHADR) is disordered. Positions 97-110 (HLSSVGQNTSHADR) are enriched in polar residues.

The chain is Protein YcgL from Salmonella schwarzengrund (strain CVM19633).